The sequence spans 1056 residues: MGDPGPEIIESVPPAGPEASESTTDENEDDIQFVSEGPLRPVLEYIDLVSSDDEEPSTSHSDENFKCKDYIDHQKDKVALTLARLARHVEVEKQQKEEKNRAFREKIDFQHAHGLQELEFIQGHSETEAARQCVDQWLKMPGLRTNAANSGTKRSFQRGGRMWRSEKPILCPIMHCNKEFDNGHLLLGHLKRFDHSPCDPTITLHGPLANSFACAVCYEHFVTQQQYKDHLLSRTAAADGHSNSLLPQIIQCYACPQCFLLFSTKDECLKHMSTKNHFHQSFKLSDNKGTARPISFPSFAKKRLVSLCKDVPFQVKCVACHQTLRSHMELTAHFRVRCQNAGPVAIAEKSITQVAKEFIVRGYCSDCNQVFMDVASTQSHKNSGHKITLANSVEESVLLYCHISEGSRPPCDLHLFSQPKISSLKRILSVKESSAEDCIVPTKKVNLGVESLGGATRVQRQSPAVTAWFCECRRQFPSEEAVEKHVFSANTMCYKCVVCGKVCEDSGVMRLHMSRFHGGAHLNNFLFWCRTCKKELVKKDAIMAHITEFHSGHRYFYEMDEVEEEEEEAMPSSSVESHLNTDKPPSPIAVVDHCPANSPPRGRWQCRICEDMFESQECVKQHCMSLTSHRFHRYSCAHCRKTFHKVETLYRHCQDEHDSEIMMKYFCGLCDLIFNKEEEFLSHYKEHHSIDYVFVSEKTKTSIKTEGDFKIVETSSLLSCGCHESYMCKINRKEDYDRCLPVLLEKGRLWFRCSSCSATAQNVTDINTHVCQVHRKEKSEEEQQYVIKCGICTKAFQNTESAQQHFHRKHAALQKPTATPGGANRSSTCQLAASASHAEKNLKQPSSQKHSDVEKGAEHDVRCQNIEEEVELPDVDYLRTMTHIVFVDFDNWSNFFGHLPGHLNQGTFIWGFQGGNTNWKPPLSCKVYNYLSRIGCFFLHPRCSKRKDAADFAICMHAGRLDEQLPKQIPFTILSGDQGFLELENQFKKTQRPAHILNPHHLEGDMMCALLNSISDTTKECDSDDSSGMKGSPAEELRATEDVELEEAIRRSLEEM.

Residues 1-39 (MGDPGPEIIESVPPAGPEASESTTDENEDDIQFVSEGPL) form a disordered region. The tract at residues 1–246 (MGDPGPEIIE…AADGHSNSLL (246 aa)) is sufficient for E3 SUMO-protein ligase activity. Positions 1 to 344 (MGDPGPEIIE…RVRCQNAGPV (344 aa)) are important for interaction with SUMO1 and SUMO2. Residues 30-37 (DIQFVSEG) form an interaction with SUMO2 1 region. A PLRP motif is present at residues 38-41 (PLRP). The interaction with SUMO2 2 stretch occupies residues 42-50 (VLEYIDLVS). Glycyl lysine isopeptide (Lys-Gly) (interchain with G-Cter in SUMO2) cross-links involve residues Lys-75, Lys-77, Lys-106, Lys-139, and Lys-153. Ser-155 bears the Phosphoserine mark. Arg-158 carries the omega-N-methylarginine modification. Residue Lys-167 forms a Glycyl lysine isopeptide (Lys-Gly) (interchain with G-Cter in SUMO2) linkage. The tract at residues 168–521 (PILCPIMHCN…HMSRFHGGAH (354 aa)) is important for interaction with SMAD4. A C2H2-type 1 zinc finger spans residues 169–195 (ILCPIMHCNKEFDNGHLLLGHLKRFDH). The segment at 212–234 (FACAVCYEHFVTQQQYKDHLLSR) adopts a C2H2-type 2; degenerate zinc-finger fold. Residues 253-277 (YACPQCFLLFSTKDECLKHMSTKNH) form a C2H2-type 3 zinc finger. Residues Lys-270, Lys-275, Lys-283, Lys-288, Lys-301, and Lys-309 each participate in a glycyl lysine isopeptide (Lys-Gly) (interchain with G-Cter in SUMO2) cross-link. The C2H2-type 4; atypical zinc finger occupies 315-338 (VKCVACHQTLRSHMELTAHFRVRC). The segment at 362–385 (GYCSDCNQVFMDVASTQSHKNSGH) adopts a C2H2-type 5 zinc-finger fold. A Glycyl lysine isopeptide (Lys-Gly) (interchain with G-Cter in SUMO2) cross-link involves residue Lys-420. Residue Ser-429 is modified to Phosphoserine. A Glycyl lysine isopeptide (Lys-Gly) (interchain with G-Cter in SUMO2) cross-link involves residue Lys-431. C2H2-type zinc fingers lie at residues 494 to 517 (YKCV…SRFH) and 527 to 550 (FWCR…TEFH). Glycyl lysine isopeptide (Lys-Gly) (interchain with G-Cter in SUMO2) cross-links involve residues Lys-539 and Lys-583. The C2H2-type 8; atypical zinc finger occupies 604–629 (WQCRICEDMFESQECVKQHCMSLTSH). 2 consecutive C2H2-type zinc fingers follow at residues 634 to 657 (YSCA…QDEH) and 665 to 688 (YFCG…KEHH). A Glycyl lysine isopeptide (Lys-Gly) (interchain with G-Cter in SUMO2) cross-link involves residue Lys-645. A Glycyl lysine isopeptide (Lys-Gly) (interchain with G-Cter in SUMO1); alternate cross-link involves residue Lys-704. Residue Lys-704 forms a Glycyl lysine isopeptide (Lys-Gly) (interchain with G-Cter in SUMO2); alternate linkage. Residues Lys-729 and Lys-746 each participate in a glycyl lysine isopeptide (Lys-Gly) (interchain with G-Cter in SUMO2) cross-link. C2H2-type zinc fingers lie at residues 751–774 (FRCS…CQVH) and 787–810 (IKCG…HRKH). Residues Lys-788, Lys-815, Lys-843, Lys-849, Lys-947, Lys-988, and Lys-989 each participate in a glycyl lysine isopeptide (Lys-Gly) (interchain with G-Cter in SUMO2) cross-link. Disordered stretches follow at residues 806 to 830 (FHRK…STCQ) and 839 to 858 (EKNL…KGAE). Positions 849 to 858 (KHSDVEKGAE) are enriched in basic and acidic residues. The disordered stretch occupies residues 1019–1045 (KECDSDDSSGMKGSPAEELRATEDVEL). The span at 1033–1045 (PAEELRATEDVEL) shows a compositional bias: basic and acidic residues. Residues 1045 to 1056 (LEEAIRRSLEEM) are important for ubiquitin binding.

This sequence belongs to the krueppel C2H2-type zinc-finger protein family. In terms of assembly, homooligomer. Interacts (via N-terminal region) with SUMO1. Interacts (via N-terminal region) with SUMO2. Interacts simultaneously with two SUMO2 chains. Identified in a complex with SUMO2 and UBE2I/UBC9, where one ZNF451 interacts with one UBE2I/UBC9 and two SUMO2 chains, one bound to the UBE2I/UBC9 active site and the other to another region of the same UBE2I/UBC9 molecule. Interacts (via C-terminus) with ubiquitin. Interacts (via N-terminal zinc-finger domains) with SMAD4 (via MH2 domain). Interacts with SMAD2 and SMAD3. Identified in a complex that contains at least ZNF451, SMAD2, SMAD3 and SMAD4. Interacts with EP300. Inhibits interaction between EP300 and the SMAD4 complex. Interacts with SIMC1. Sumoylated. Predominantly sumoylated on the N-terminal region that is important for interaction with SUMO1 and SUMO2. Sumoylation is important for localization in nuclear granules; desumoylation leads to diffuse nucleoplasmic location. Autosumoylated (in vitro). Sumoylation enhances E3 SUMO-protein ligase activity.

Its subcellular location is the nucleus. The protein localises to the PML body. The protein resides in the nucleoplasm. It participates in protein modification; protein sumoylation. E3 SUMO-protein ligase; has a preference for SUMO2 and SUMO3 and facilitates UBE2I/UBC9-mediated sumoylation of target proteins. Plays a role in protein SUMO2 modification in response to stress caused by DNA damage and by proteasome inhibitors (in vitro). Required for MCM4 sumoylation. Has no activity with SUMO1. Preferentially transfers an additional SUMO2 chain onto the SUMO2 consensus site 'Lys-11'. Negatively regulates transcriptional activation mediated by the SMAD4 complex in response to TGF-beta signaling. Inhibits EP300-mediated acetylation of histone H3 at 'Lys-9'. Plays a role in regulating the transcription of AR targets. The polypeptide is E3 SUMO-protein ligase ZNF451 (Znf451) (Mus musculus (Mouse)).